The following is a 44-amino-acid chain: Cytochrome b559 subunit beta (44 aa).

The helical transmembrane segment at 19 to 35 (WIAVHTLAVPSVFFLGA) threads the bilayer. H23 is a binding site for heme.

This sequence belongs to the PsbE/PsbF family. In terms of assembly, heterodimer of an alpha subunit and a beta subunit. PSII is composed of 1 copy each of membrane proteins PsbA, PsbB, PsbC, PsbD, PsbE, PsbF, PsbH, PsbI, PsbJ, PsbK, PsbL, PsbM, PsbT, PsbX, PsbY, PsbZ, Psb30/Ycf12, peripheral proteins PsbO, CyanoQ (PsbQ), PsbU, PsbV and a large number of cofactors. It forms dimeric complexes. Heme b is required as a cofactor.

Its subcellular location is the cellular thylakoid membrane. This b-type cytochrome is tightly associated with the reaction center of photosystem II (PSII). PSII is a light-driven water:plastoquinone oxidoreductase that uses light energy to abstract electrons from H(2)O, generating O(2) and a proton gradient subsequently used for ATP formation. It consists of a core antenna complex that captures photons, and an electron transfer chain that converts photonic excitation into a charge separation. This Cyanothece sp. (strain PCC 7425 / ATCC 29141) protein is Cytochrome b559 subunit beta.